The primary structure comprises 248 residues: Probable transcriptional regulatory protein PSPA7_4544 (248 aa).

The protein belongs to the TACO1 family.

The protein localises to the cytoplasm. This chain is Probable transcriptional regulatory protein PSPA7_4544, found in Pseudomonas paraeruginosa (strain DSM 24068 / PA7) (Pseudomonas aeruginosa (strain PA7)).